A 242-amino-acid polypeptide reads, in one-letter code: Large ribosomal subunit protein uL1 (242 aa).

Belongs to the universal ribosomal protein uL1 family. Part of the 50S ribosomal subunit.

Functionally, binds directly to 23S rRNA. The L1 stalk is quite mobile in the ribosome, and is involved in E site tRNA release. Protein L1 is also a translational repressor protein, it controls the translation of the L11 operon by binding to its mRNA. The protein is Large ribosomal subunit protein uL1 of Streptomyces virginiae (Streptomyces cinnamonensis).